Reading from the N-terminus, the 540-residue chain is CTP synthase (540 aa).

Positions 1 to 273 are amidoligase domain; sequence MNNKDLKTKF…DDFILQHFKL (273 aa). A CTP-binding site is contributed by S19. UTP is bound at residue S19. Residue 20-25 participates in ATP binding; that stretch reads SLGKGI. Y60 provides a ligand contact to L-glutamine. Position 77 (D77) interacts with ATP. Mg(2+)-binding residues include D77 and E147. Residues 154-156, 194-199, and K230 each bind CTP; these read DIE and KTKPTQ. UTP contacts are provided by residues 194-199 and K230; that span reads KTKPTQ. The Glutamine amidotransferase type-1 domain occupies 306-539; that stretch reads YIVLHDAYLS…VEASLLNQKN (234 aa). An L-glutamine-binding site is contributed by G361. The active-site Nucleophile; for glutamine hydrolysis is the C388. L-glutamine is bound by residues 389–392, E412, and R466; that span reads LGMQ. Active-site residues include H512 and E514.

Belongs to the CTP synthase family. In terms of assembly, homotetramer.

It catalyses the reaction UTP + L-glutamine + ATP + H2O = CTP + L-glutamate + ADP + phosphate + 2 H(+). The enzyme catalyses L-glutamine + H2O = L-glutamate + NH4(+). It carries out the reaction UTP + NH4(+) + ATP = CTP + ADP + phosphate + 2 H(+). Its pathway is pyrimidine metabolism; CTP biosynthesis via de novo pathway; CTP from UDP: step 2/2. Allosterically activated by GTP, when glutamine is the substrate; GTP has no effect on the reaction when ammonia is the substrate. The allosteric effector GTP functions by stabilizing the protein conformation that binds the tetrahedral intermediate(s) formed during glutamine hydrolysis. Inhibited by the product CTP, via allosteric rather than competitive inhibition. Catalyzes the ATP-dependent amination of UTP to CTP with either L-glutamine or ammonia as the source of nitrogen. Regulates intracellular CTP levels through interactions with the four ribonucleotide triphosphates. The chain is CTP synthase from Onion yellows phytoplasma (strain OY-M).